The following is a 424-amino-acid chain: Chloroquine resistance transporter (424 aa).

Over residues methionine 1–glycine 10 the composition is skewed to basic residues. Residues methionine 1–glutamate 32 are disordered. At methionine 1–asparagine 57 the chain is on the cytoplasmic side. The segment covering proline 16–asparagine 29 has biased composition (basic and acidic residues). A helical transmembrane segment spans residues isoleucine 58–alanine 78. The Vacuolar segment spans residues lysine 79–serine 89. Asparagine 87 carries N-linked (GlcNAc...) asparagine glycosylation. A helical membrane pass occupies residues phenylalanine 90 to methionine 110. At phenylalanine 111–asparagine 124 the chain is on the cytoplasmic side. Residues phenylalanine 125–isoleucine 145 traverse the membrane as a helical segment. Residues glycine 146–asparagine 153 lie on the Vacuolar side of the membrane. The helical transmembrane segment at isoleucine 154 to leucine 174 threads the bilayer. Residues arginine 175 to histidine 179 lie on the Cytoplasmic side of the membrane. A helical transmembrane segment spans residues leucine 180–leucine 200. Residues serine 201–asparagine 208 lie on the Vacuolar side of the membrane. The helical transmembrane segment at serine 209–threonine 229 threads the bilayer. The Cytoplasmic segment spans residues arginine 230–alanine 246. Residues valine 247–phenylalanine 267 form a helical membrane-spanning segment. The Vacuolar segment spans residues leucine 268–lysine 316. Intrachain disulfides connect cysteine 288–cysteine 311 and cysteine 300–cysteine 308. A helical transmembrane segment spans residues threonine 317 to glutamate 337. Topologically, residues lysine 338–threonine 345 are cytoplasmic. A helical membrane pass occupies residues isoleucine 346–glycine 366. The Vacuolar portion of the chain corresponds to aspartate 367 to aspartate 376. The helical transmembrane segment at phenylalanine 377–leucine 397 threads the bilayer. The Cytoplasmic segment spans residues glutamate 398–histidine 424.

It belongs to the CRT-like transporter family.

It localises to the vacuole membrane. Its function is as follows. Nutrient transporter. Involved in maintaining the osmotic homeostasis of the digestive vacuole. In Plasmodium vivax (strain Salvador I), this protein is Chloroquine resistance transporter.